The chain runs to 659 residues: DNA ligase (659 aa).

Residues 32–36 (DFEYD), 81–82 (SL), and E111 each bind NAD(+). K113 functions as the N6-AMP-lysine intermediate in the catalytic mechanism. NAD(+) is bound by residues R134, E168, K280, and K304. Zn(2+) contacts are provided by C398, C401, C416, and C421. Residues 585–655 (ETNSIYFQKR…KELNIPIINE (71 aa)) form the BRCT domain.

Belongs to the NAD-dependent DNA ligase family. LigA subfamily. Mg(2+) is required as a cofactor. Requires Mn(2+) as cofactor.

The catalysed reaction is NAD(+) + (deoxyribonucleotide)n-3'-hydroxyl + 5'-phospho-(deoxyribonucleotide)m = (deoxyribonucleotide)n+m + AMP + beta-nicotinamide D-nucleotide.. In terms of biological role, DNA ligase that catalyzes the formation of phosphodiester linkages between 5'-phosphoryl and 3'-hydroxyl groups in double-stranded DNA using NAD as a coenzyme and as the energy source for the reaction. It is essential for DNA replication and repair of damaged DNA. This is DNA ligase from Mycoplasma genitalium (strain ATCC 33530 / DSM 19775 / NCTC 10195 / G37) (Mycoplasmoides genitalium).